The chain runs to 767 residues: Probable NADP-dependent malic enzyme (767 aa).

The tract at residues 1–430 (MDEMNKINYT…QLGSRLNPTA (430 aa)) is malic enzyme. The active-site Proton donor is the tyrosine 42. The active-site Proton acceptor is lysine 97. Glutamate 139, aspartate 140, and aspartate 165 together coordinate a divalent metal cation. Residues 198–201 (AGAA), asparagine 290, and asparagine 322 each bind NADP(+). Positions 431–767 (NYMNFLAEKI…FACVEAIKEV (337 aa)) are phosphate acetyltransferase.

It in the N-terminal section; belongs to the malic enzymes family. This sequence in the C-terminal section; belongs to the phosphate acetyltransferase and butyryltransferase family. The cofactor is Mg(2+). Mn(2+) is required as a cofactor.

The enzyme catalyses (S)-malate + NADP(+) = pyruvate + CO2 + NADPH. It catalyses the reaction oxaloacetate + H(+) = pyruvate + CO2. The polypeptide is Probable NADP-dependent malic enzyme (Rickettsia prowazekii (strain Madrid E)).